The following is a 349-amino-acid chain: Ferredoxin--NADP reductase 3 (349 aa).

7 residues coordinate FAD: glutamate 34, lysine 42, tyrosine 46, valine 86, isoleucine 120, aspartate 287, and serine 328.

This sequence belongs to the ferredoxin--NADP reductase type 2 family. As to quaternary structure, homodimer. The cofactor is FAD.

The catalysed reaction is 2 reduced [2Fe-2S]-[ferredoxin] + NADP(+) + H(+) = 2 oxidized [2Fe-2S]-[ferredoxin] + NADPH. The sequence is that of Ferredoxin--NADP reductase 3 from Lysinibacillus sphaericus (strain C3-41).